Here is a 306-residue protein sequence, read N- to C-terminus: 3-methyl-2-oxobutanoate hydroxymethyltransferase (306 aa).

Mg(2+)-binding residues include aspartate 53 and aspartate 96. Residues aspartate 53 to serine 54, aspartate 96, and lysine 126 each bind 3-methyl-2-oxobutanoate. A Mg(2+)-binding site is contributed by glutamate 128. Glutamate 195 functions as the Proton acceptor in the catalytic mechanism.

The protein belongs to the PanB family. As to quaternary structure, homodecamer; pentamer of dimers. It depends on Mg(2+) as a cofactor.

It localises to the cytoplasm. It carries out the reaction 3-methyl-2-oxobutanoate + (6R)-5,10-methylene-5,6,7,8-tetrahydrofolate + H2O = 2-dehydropantoate + (6S)-5,6,7,8-tetrahydrofolate. It participates in cofactor biosynthesis; (R)-pantothenate biosynthesis; (R)-pantoate from 3-methyl-2-oxobutanoate: step 1/2. Its function is as follows. Catalyzes the reversible reaction in which hydroxymethyl group from 5,10-methylenetetrahydrofolate is transferred onto alpha-ketoisovalerate to form ketopantoate. This chain is 3-methyl-2-oxobutanoate hydroxymethyltransferase, found in Anaeromyxobacter sp. (strain K).